The chain runs to 128 residues: Ribonuclease P protein component (128 aa).

Belongs to the RnpA family. As to quaternary structure, consists of a catalytic RNA component (M1 or rnpB) and a protein subunit.

It carries out the reaction Endonucleolytic cleavage of RNA, removing 5'-extranucleotides from tRNA precursor.. In terms of biological role, RNaseP catalyzes the removal of the 5'-leader sequence from pre-tRNA to produce the mature 5'-terminus. It can also cleave other RNA substrates such as 4.5S RNA. The protein component plays an auxiliary but essential role in vivo by binding to the 5'-leader sequence and broadening the substrate specificity of the ribozyme. The polypeptide is Ribonuclease P protein component (Prochlorococcus marinus (strain MIT 9215)).